A 93-amino-acid polypeptide reads, in one-letter code: Small ribosomal subunit protein uS19 (93 aa).

This sequence belongs to the universal ribosomal protein uS19 family.

Its function is as follows. Protein S19 forms a complex with S13 that binds strongly to the 16S ribosomal RNA. This is Small ribosomal subunit protein uS19 from Caldanaerobacter subterraneus subsp. tengcongensis (strain DSM 15242 / JCM 11007 / NBRC 100824 / MB4) (Thermoanaerobacter tengcongensis).